A 332-amino-acid chain; its full sequence is tRNA (cytosine(38)-C(5))-methyltransferase (332 aa).

Residues 3 to 332 enclose the SAM-dependent MTase C5-type domain; the sequence is HKILELYSGI…ISELLKILFE (330 aa). Residues 12 to 14, 33 to 34, 55 to 56, and serine 75 contribute to the S-adenosyl-L-homocysteine site; these read IGG, DI, and NI. The active site involves cysteine 78. S-adenosyl-L-homocysteine contacts are provided by residues glutamine 79, serine 97, and 316–317; that span reads NS.

It belongs to the class I-like SAM-binding methyltransferase superfamily. C5-methyltransferase family.

The protein resides in the cytoplasm. It localises to the nucleus. The catalysed reaction is cytidine(38) in tRNA + S-adenosyl-L-methionine = 5-methylcytidine(38) in tRNA + S-adenosyl-L-homocysteine + H(+). It catalyses the reaction a 2'-deoxycytidine in DNA + S-adenosyl-L-methionine = a 5-methyl-2'-deoxycytidine in DNA + S-adenosyl-L-homocysteine + H(+). Its function is as follows. Specifically methylates cytosine 38 in the anticodon loop of tRNA(Asp). Also has DNA (cytosine-5)-methyltransferase activity. Shows affinity for both tRNA(Asp) and DNA substrates. This Spodoptera frugiperda (Fall armyworm) protein is tRNA (cytosine(38)-C(5))-methyltransferase.